Reading from the N-terminus, the 652-residue chain is Acetyl-coenzyme A synthetase (652 aa).

CoA contacts are provided by residues R191 to R194, T311, and N335. ATP-binding positions include G387 to P389, D411 to T416, D500, and R515. S523 provides a ligand contact to CoA. Position 526 (R526) interacts with ATP. V537, H539, and I542 together coordinate Mg(2+). R584 contacts CoA. The residue at position 609 (K609) is an N6-acetyllysine.

Belongs to the ATP-dependent AMP-binding enzyme family. Mg(2+) is required as a cofactor. Acetylated. Deacetylation by the SIR2-homolog deacetylase activates the enzyme.

The enzyme catalyses acetate + ATP + CoA = acetyl-CoA + AMP + diphosphate. Catalyzes the conversion of acetate into acetyl-CoA (AcCoA), an essential intermediate at the junction of anabolic and catabolic pathways. Acs undergoes a two-step reaction. In the first half reaction, Acs combines acetate with ATP to form acetyl-adenylate (AcAMP) intermediate. In the second half reaction, it can then transfer the acetyl group from AcAMP to the sulfhydryl group of CoA, forming the product AcCoA. In terms of biological role, enables the cell to use acetate during aerobic growth to generate energy via the TCA cycle, and biosynthetic compounds via the glyoxylate shunt. Acetylates CheY, the response regulator involved in flagellar movement and chemotaxis. This chain is Acetyl-coenzyme A synthetase, found in Escherichia coli O157:H7.